The primary structure comprises 420 residues: Vacuolar amino acid transporter 5 (420 aa).

The Cytoplasmic portion of the chain corresponds to 1 to 19 (MSGYSPLSSGPADVHIGKA). A helical membrane pass occupies residues 20–40 (GFFSSVINLANTILGAGILSL). At 41–49 (PNAFTKTGL) the chain is on the vacuolar side. A helical membrane pass occupies residues 50-70 (LFGCLTIVFSAFASFLGLYFV). The Cytoplasmic portion of the chain corresponds to 71–96 (SQCAARLPRGKASFAAVAKHTFPSLA). The chain crosses the membrane as a helical span at residues 97 to 117 (VVFDASIAVKCFGVAVSYLVI). The Vacuolar segment spans residues 118 to 141 (VGDLMPQIAPSLGLSSPMFLRRQT). The chain crosses the membrane as a helical span at residues 142-162 (WIVFALFVLTPLSFLKRLDSL). Over 163-166 (RHTS) the chain is Cytoplasmic. Residues 167–187 (VISLIALCYLVFIVLYHFIIG) traverse the membrane as a helical segment. Topologically, residues 188–195 (DTVKGEIR) are vacuolar. The helical transmembrane segment at 196–216 (YFVPESGFGYLSVLPVFVFGF) threads the bilayer. Over 217–240 (TCHQNAFSVINEVRNFSQGFVNFT) the chain is Cytoplasmic. A helical transmembrane segment spans residues 241 to 261 (MFTAIISSTLLYLLVAITGYL). Over 262–278 (SFGSLASGNIIAMYDNT) the chain is Vacuolar. Residues 279–299 (SIWIIGGKLAIVVLVLFSYPL) traverse the membrane as a helical segment. At 300–326 (QCHPCRNSVYQAIRRSYSAHDMSDGYH) the chain is on the cytoplasmic side. Residues 327–347 (AVITLCILLFTHSLALLLSSL) form a helical membrane-spanning segment. The Vacuolar segment spans residues 348-349 (EM). A helical transmembrane segment spans residues 350-370 (VLAFVGSTGSTFISFILPGSL). Over 371 to 394 (YYFFSHKVASPGNSSPLQLRISRA) the chain is Cytoplasmic. The chain crosses the membrane as a helical span at residues 395–415 (FAAGLAIYGTVVMILCLNINI). Over 416–420 (AKLSH) the chain is Vacuolar.

It belongs to the amino acid/polyamine transporter 2 family.

It is found in the vacuole membrane. In terms of biological role, vacuolar amino acid transporter involved in the vacuolar uptake of histidine, glutamate, tyrosine, arginine, lysine, and serine. Required for sporulation. The sequence is that of Vacuolar amino acid transporter 5 (avt5) from Schizosaccharomyces pombe (strain 972 / ATCC 24843) (Fission yeast).